The following is a 420-amino-acid chain: Transcription factor bHLH89 (420 aa).

A disordered region spans residues E196–K216. The span at R207–K216 shows a compositional bias: basic residues. In terms of domain architecture, bHLH spans S212 to L261.

Homodimer. Flowers.

It localises to the nucleus. This Arabidopsis thaliana (Mouse-ear cress) protein is Transcription factor bHLH89 (BHLH89).